We begin with the raw amino-acid sequence, 185 residues long: Urease accessory protein UreE (185 aa).

Residues 153-185 form a disordered region; sequence LRANSAQGHGHSHSHSHDHHGYHHHGDGNWHKH. Positions 162 to 175 are enriched in basic residues; that stretch reads GHSHSHSHDHHGYH. Over residues 176–185 the composition is skewed to basic and acidic residues; sequence HHGDGNWHKH.

It belongs to the UreE family.

The protein localises to the cytoplasm. In terms of biological role, involved in urease metallocenter assembly. Binds nickel. Probably functions as a nickel donor during metallocenter assembly. The chain is Urease accessory protein UreE from Haemophilus influenzae (strain PittGG).